The following is a 243-amino-acid chain: MIIIPARLKSSRFENKVLEDIFGLPMVVRCAKNANLVDECVVACDDESIMQTCQKFHIKAVLTSKHHNSGTERCLEAARILGLKNDERVLNLQGDEPFLEKEVILALLEATKNAPFMATCAKVIDEEQAKSPNLVKVVLDSQNNALYFSRSLIPFLRDFDAKRQTPLLGHIGIYGFHNKEILEELCTLKPCVLEDTEKLEQLRALYYQKKIAVKIVQSQSVGIDTQEDLENALKIFSPNLLER.

This sequence belongs to the KdsB family.

It localises to the cytoplasm. The enzyme catalyses 3-deoxy-alpha-D-manno-oct-2-ulosonate + CTP = CMP-3-deoxy-beta-D-manno-octulosonate + diphosphate. It participates in nucleotide-sugar biosynthesis; CMP-3-deoxy-D-manno-octulosonate biosynthesis; CMP-3-deoxy-D-manno-octulosonate from 3-deoxy-D-manno-octulosonate and CTP: step 1/1. It functions in the pathway bacterial outer membrane biogenesis; lipopolysaccharide biosynthesis. Functionally, activates KDO (a required 8-carbon sugar) for incorporation into bacterial lipopolysaccharide in Gram-negative bacteria. This chain is 3-deoxy-manno-octulosonate cytidylyltransferase, found in Helicobacter pylori (strain HPAG1).